Reading from the N-terminus, the 137-residue chain is Structural protein A137R (137 aa).

This sequence belongs to the asfivirus A137R family. As to quaternary structure, interacts with host TBK1.

It localises to the virion. Its subcellular location is the host cytoplasm. Plays a role in the inhibition of the host innate immune response. Mechanistically, promotes the autophagy-mediated lysosomal degradation of host TBK1 and affects IRF3 nuclear translocation to block type I IFN production. The protein is Structural protein A137R of Ornithodoros (relapsing fever ticks).